A 139-amino-acid chain; its full sequence is Protein Turandot B (139 aa).

Positions 1 to 21 are cleaved as a signal peptide; that stretch reads MNFKTALICFALLLIGTLCSA.

The protein belongs to the Turandot family.

It is found in the secreted. Its function is as follows. A humoral factor that may play a role in stress tolerance. The protein is Protein Turandot B of Drosophila sechellia (Fruit fly).